The following is an 805-amino-acid chain: Polycystin-2-like protein 1 (805 aa).

The segment at 1–59 (MNAVGSPEGQELQKLGSGAWDNPAYSGPPSPHGTLRVCTISSTGPLQPQPKKPEDEPQE) is disordered. The Cytoplasmic segment spans residues 1–103 (MNAVGSPEGQ…ELYIKTTLRE (103 aa)). Cysteine 38 carries the S-palmitoyl cysteine lipid modification. Residues 104–124 (LLVYIVFLVDICLLTYGMTSS) form a helical membrane-spanning segment. Residues 125–356 (SAYYYTKVMS…NWDFFIVGCE (232 aa)) lie on the Extracellular side of the membrane. Residues asparagine 177 and asparagine 207 are each glycosylated (N-linked (GlcNAc...) asparagine). A disulfide bridge links cysteine 210 with cysteine 223. Asparagine 241 is a glycosylation site (N-linked (GlcNAc...) asparagine). A helical membrane pass occupies residues 357–376 (VIFCVFIFYYVVEEILELHI). Ca(2+) contacts are provided by glutamate 370 and glutamate 373. The Cytoplasmic segment spans residues 377–384 (HRLRYLSS). A helical transmembrane segment spans residues 385 to 405 (IWNILDLVVILLSIVAVGFHI). Ca(2+)-binding residues include asparagine 387 and aspartate 390. Over 406 to 433 (FRTLEVNRLMGKLLQQPNTYADFEFLAF) the chain is Extracellular. The helical transmembrane segment at 434 to 454 (WQTQYNNMNAVNLFFAWIKIF) threads the bilayer. Over 455-479 (KYISFNKTMTQLSSTLARCAKDILG) the chain is Cytoplasmic. Residues 480-499 (FAVMFFIVFFAYAQLGYLLF) traverse the membrane as a helical segment. Residues 500–511 (GTQVENFSTFIK) lie on the Extracellular side of the membrane. An N-linked (GlcNAc...) asparagine glycan is attached at asparagine 505. An intramembrane region (pore-forming) is located at residues 512–526 (CIFTQFRIILGDFDY). Topologically, residues 527-536 (NAIDNANRIL) are extracellular. Residues 537–557 (GPAYFVTYVFFVFFVLLNMFL) traverse the membrane as a helical segment. Residues 558–805 (AIINDTYSEV…RGEIPTLQRS (248 aa)) are Cytoplasmic-facing. One can recognise an EF-hand domain in the interval 633–668 (HEITELTATFTKFDRDGNRILDEKEQEKMRQDLEEE). Coiled coils occupy residues 650 to 686 (NRIL…IVSS) and 700 to 740 (GWVS…MLER). The required for homooligomerization stretch occupies residues 704-763 (GEEFYMLTRRVLQLETVLEGVVSQIDAVGSKLKMLERKGWLAPSPGVKEQAIWKHPQPAP). The interval 759 to 805 (PQPAPAVTPDPWGVQGGQESEVPYKREEEALEERRLSRGEIPTLQRS) is disordered. A compositionally biased stretch (basic and acidic residues) spans 780 to 796 (VPYKREEEALEERRLSR).

This sequence belongs to the polycystin family. Oligomer. Functional PKD2L1 homotetramer can be formed either through C-terminal trimerization followed by N-terminal dimerization of a fourth subunit with a subunit in the trimer or through dimerization followed by trimerization. Heterotetramer with either PKD1L1, PKD1L3 or PKD1; the heterotetrameric complex contains three PKD1L2 chains plus one chain from another family member. Interacts with PKD1L1, forming a ciliary calcium channel. Interacts with PKD1L3, forming a cation channel that is activated by low extracellular pH. Interacts with PKD1; this heteromeric functional cation channels is opened by hypo-osmotic stimulation. Interacts with RACK1; inhibits the channel activity possibly by impairing localization to the cell membrane. Post-translationally, palmitoylation is important for expression at the cell membrane and for channel activity. As to expression, detected in taste bud cells in fungiform papillae (at protein level). Ubiquitous. Expressed in adult heart, skeletal muscle, brain, spleen, testis, retina and liver. Isoform 4 appears to be expressed only in transformed lymphoblasts.

The protein localises to the cell projection. It is found in the cilium membrane. The protein resides in the cell membrane. Its subcellular location is the cytoplasmic vesicle. It carries out the reaction Ca(2+)(in) = Ca(2+)(out). It catalyses the reaction Na(+)(in) = Na(+)(out). The catalysed reaction is K(+)(in) = K(+)(out). The enzyme catalyses Mg(2+)(in) = Mg(2+)(out). With respect to regulation, the non-selective cation channel is gated following an off-response property by acid: gated open after the removal of acid stimulus, but not during acid application. Channel activity is inhibited by phosphatidylinositol-4,5-bisphosphate (PIP2). Non-selective cation channel activity is substantially increased when either the extracellular or intracellular calcium-ion concentration is raised. Regulation of non-selective cation channel activity by external calcium is bimodal, first sensitizing and subsequently inactivating the current. In terms of biological role, homotetrameric, non-selective cation channel that is permeable to sodium, potassium, magnesium and calcium. Also forms functionnal heteromeric channels with PKD1, PKD1L1 and PKD1L3. Pore-forming subunit of a heterotetrameric, non-selective cation channel, formed by PKD1L2 and PKD1L3, that is permeable to sodium, potassium, magnesium and calcium and which may act as a sour taste receptor in gustatory cells; however, its contribution to sour taste perception is unclear in vivo and may be indirect. The homomeric and heteromeric channels formed by PKD1L2 and PKD1L3 are activated by low pH and Ca(2+), but opens only when the extracellular pH rises again and after the removal of acid stimulus. Pore-forming subunit of a calcium-permeant ion channel formed by PKD1L2 and PKD1L1 in primary cilia, where it controls cilium calcium concentration, without affecting cytoplasmic calcium concentration, and regulates sonic hedgehog/SHH signaling and GLI2 transcription. The PKD1L1:PKD2L1 complex channel is mechanosensitive only at high pressures and is highly temperature sensitive. Pore-forming subunit of a calcium-permeant ion channel formed by PKD1L2 and PKD1 that produces a transient increase in intracellular calcium concentration upon hypo-osmotic stimulation (200 mOsm). May play a role in the perception of carbonation taste. May play a role in the sensory perception of water, via a mechanism that activates the channel in response to dilution of salivary bicarbonate and changes in salivary pH. The protein is Polycystin-2-like protein 1 of Homo sapiens (Human).